The chain runs to 156 residues: Methylated-DNA--protein-cysteine methyltransferase (156 aa).

The active-site Nucleophile; methyl group acceptor is the Cys-120.

The protein belongs to the MGMT family.

The protein localises to the cytoplasm. It carries out the reaction a 6-O-methyl-2'-deoxyguanosine in DNA + L-cysteinyl-[protein] = S-methyl-L-cysteinyl-[protein] + a 2'-deoxyguanosine in DNA. It catalyses the reaction a 4-O-methyl-thymidine in DNA + L-cysteinyl-[protein] = a thymidine in DNA + S-methyl-L-cysteinyl-[protein]. Functionally, involved in the cellular defense against the biological effects of O6-methylguanine (O6-MeG) and O4-methylthymine (O4-MeT) in DNA. Repairs the methylated nucleobase in DNA by stoichiometrically transferring the methyl group to a cysteine residue in the enzyme. This is a suicide reaction: the enzyme is irreversibly inactivated. This chain is Methylated-DNA--protein-cysteine methyltransferase, found in Sulfurisphaera tokodaii (strain DSM 16993 / JCM 10545 / NBRC 100140 / 7) (Sulfolobus tokodaii).